Consider the following 77-residue polypeptide: Conotoxin ArMKLT2-0322 (77 aa).

The first 22 residues, 1 to 22 (MKLTCVLIIAVLFLIVCQLNTA), serve as a signal peptide directing secretion. Positions 23–47 (DDSRDKQEYRAVRLRDAIRNSRGSR) are excised as a propeptide. 3 disulfides stabilise this stretch: C49–C62, C56–C67, and C61–C74.

It belongs to the conotoxin O1 superfamily. As to expression, expressed by the venom duct.

Its subcellular location is the secreted. The polypeptide is Conotoxin ArMKLT2-0322 (Conus arenatus (Sand-dusted cone)).